A 418-amino-acid polypeptide reads, in one-letter code: S-adenosylmethionine synthase (418 aa).

Residue His-16 coordinates ATP. Asp-18 contacts Mg(2+). Glu-44 contributes to the K(+) binding site. Residues Glu-57 and Gln-100 each contribute to the L-methionine site. The flexible loop stretch occupies residues 100–110 (QSPDISQGVTK). Residues 175–177 (DGK), 251–252 (KF), Asp-260, 266–267 (RK), Ala-283, and Lys-287 each bind ATP. Asp-260 is an L-methionine binding site. Lys-291 serves as a coordination point for L-methionine.

Belongs to the AdoMet synthase family. As to quaternary structure, homotetramer; dimer of dimers. Mg(2+) is required as a cofactor. It depends on K(+) as a cofactor.

It is found in the cytoplasm. It catalyses the reaction L-methionine + ATP + H2O = S-adenosyl-L-methionine + phosphate + diphosphate. Its pathway is amino-acid biosynthesis; S-adenosyl-L-methionine biosynthesis; S-adenosyl-L-methionine from L-methionine: step 1/1. In terms of biological role, catalyzes the formation of S-adenosylmethionine (AdoMet) from methionine and ATP. The overall synthetic reaction is composed of two sequential steps, AdoMet formation and the subsequent tripolyphosphate hydrolysis which occurs prior to release of AdoMet from the enzyme. In Gloeothece citriformis (strain PCC 7424) (Cyanothece sp. (strain PCC 7424)), this protein is S-adenosylmethionine synthase.